Reading from the N-terminus, the 352-residue chain is Transcriptional regulatory protein AlgP (352 aa).

Residues 128-352 (KALESRKAKP…SNGAAPTSAS (225 aa)) are disordered. Positions 138 to 341 (ATKPAAKAAA…SSAASATPAA (204 aa)) are enriched in low complexity.

Functionally, the promoter for a critical alginate biosynthetic gene, AlgD, encoding GDP-mannose dehydrogenase, is activated only under conditions reminiscent of the cystic fibrosis lung (i.e. under high osmolarity), and at least two regulatory genes, AlgP and AlgQ, have been implicated in this activation process. This chain is Transcriptional regulatory protein AlgP (algP), found in Pseudomonas aeruginosa (strain ATCC 15692 / DSM 22644 / CIP 104116 / JCM 14847 / LMG 12228 / 1C / PRS 101 / PAO1).